The chain runs to 2492 residues: Polyketide synthase 19 (2492 aa).

One can recognise a Ketosynthase family 3 (KS3) domain in the interval 12–463 (REPIAIVGTS…GTNAHAIVES (452 aa)). Active-site for beta-ketoacyl synthase activity residues include C202, H341, and H383. The tract at residues 571–866 (VFTGQGAQWA…LEVGPHPALK (296 aa)) is malonyl-CoA:ACP transacylase (MAT) domain. The tract at residues 967 to 1110 (HELLGRSVSH…GRIRLWLEQP (144 aa)) is N-terminal hotdog fold. The segment at 967-1270 (HELLGRSVSH…GVQMTAIGKP (304 aa)) is dehydratase (DH) domain. Residues 967–1273 (HELLGRSVSH…MTAIGKPPDR (307 aa)) form the PKS/mFAS DH domain. Catalysis depends on H1001, which acts as the Proton acceptor; for dehydratase activity. Positions 1125–1273 (MSELNMAQVY…MTAIGKPPDR (149 aa)) are C-terminal hotdog fold. D1183 (proton donor; for dehydratase activity) is an active-site residue. A C-methyltransferase (CMeT) domain region spans residues 1431-1604 (LGAIVKQLGH…KTTGFSGVDI (174 aa)). Positions 2118–2293 (SYLLFGMTGD…AGSIVHISVL (176 aa)) are ketoreductase (KR) domain. The 76-residue stretch at 2404–2479 (PILEKRFAQA…RVCDDVLVDW (76 aa)) folds into the Carrier domain. At S2438 the chain carries O-(pantetheine 4'-phosphoryl)serine.

Highly reducing polyketide synthase; part of the gene cluster that mediates the biosynthesis of fujikurins A-D, secondary metabolites playing a role during rice infection. The polyketide synthase PKS19 acts with the trans-enoyl reductase FFUJ_12240 and the polyketide transferase FFUJ_12241 to produce fujikurins, however, the biosynthesis pathway has not been identified yet. The protein is Polyketide synthase 19 of Gibberella fujikuroi (strain CBS 195.34 / IMI 58289 / NRRL A-6831) (Bakanae and foot rot disease fungus).